The following is a 224-amino-acid chain: Heme response regulator HssR (224 aa).

One can recognise a Response regulatory domain in the interval 3 to 116 (QCLVVDDDSR…ELIFRIRAVL (114 aa)). Asp52 is modified (4-aspartylphosphate). Residues 124-222 (NSEMTIGNLT…VRGQGYKVEN (99 aa)) constitute a DNA-binding region (ompR/PhoB-type).

In terms of processing, phosphorylated by HssS.

The protein localises to the cytoplasm. Member of the two-component regulatory system HssS/HssR involved in intracellular heme homeostasis and tempering of staphylococcal virulence. Phosphorylated HssR binds to a direct repeat sequence within hrtAB promoter and activates the expression of hrtAB, an efflux pump, in response to extracellular heme, hemin, hemoglobin or blood. The chain is Heme response regulator HssR (hssR) from Staphylococcus aureus (strain bovine RF122 / ET3-1).